We begin with the raw amino-acid sequence, 128 residues long: ATP synthase epsilon chain (128 aa).

The interval E98–R128 is disordered. Basic residues predominate over residues R118 to R128.

The protein belongs to the ATPase epsilon chain family. F-type ATPases have 2 components, CF(1) - the catalytic core - and CF(0) - the membrane proton channel. CF(1) has five subunits: alpha(3), beta(3), gamma(1), delta(1), epsilon(1). CF(0) has three main subunits: a, b and c.

Its subcellular location is the cell inner membrane. In terms of biological role, produces ATP from ADP in the presence of a proton gradient across the membrane. This Rhodopirellula baltica (strain DSM 10527 / NCIMB 13988 / SH1) protein is ATP synthase epsilon chain.